Consider the following 144-residue polypeptide: Putative pre-16S rRNA nuclease (144 aa).

Belongs to the YqgF nuclease family.

It is found in the cytoplasm. Its function is as follows. Could be a nuclease involved in processing of the 5'-end of pre-16S rRNA. This chain is Putative pre-16S rRNA nuclease, found in Picosynechococcus sp. (strain ATCC 27264 / PCC 7002 / PR-6) (Agmenellum quadruplicatum).